An 86-amino-acid polypeptide reads, in one-letter code: Large ribosomal subunit protein bL27 (86 aa).

The interval 1–26 (MATKKAGGSSRNGRDSAGRRLGVKKS) is disordered.

It belongs to the bacterial ribosomal protein bL27 family.

The chain is Large ribosomal subunit protein bL27 from Rickettsia akari (strain Hartford).